We begin with the raw amino-acid sequence, 517 residues long: Crotonobetaine/carnitine--CoA ligase (517 aa).

It belongs to the ATP-dependent AMP-binding enzyme family.

It carries out the reaction 4-(trimethylamino)butanoate + ATP + CoA = 4-(trimethylamino)butanoyl-CoA + AMP + diphosphate. The enzyme catalyses crotonobetaine + ATP + CoA = crotonobetainyl-CoA + AMP + diphosphate. The catalysed reaction is (R)-carnitine + ATP + CoA = (R)-carnitinyl-CoA + AMP + diphosphate. Its pathway is amine and polyamine metabolism; carnitine metabolism. Functionally, catalyzes the transfer of CoA to carnitine, generating the initial carnitinyl-CoA needed for the CaiB reaction cycle. Also has activity toward crotonobetaine and gamma-butyrobetaine. The sequence is that of Crotonobetaine/carnitine--CoA ligase from Escherichia coli O8 (strain IAI1).